The following is a 295-amino-acid chain: Probable protein phosphatase 2C 6 (295 aa).

The PPM-type phosphatase domain occupies 23-294 (QYAATHMQGW…DNMTCILIQF (272 aa)). 4 residues coordinate Mn(2+): Asp57, Gly58, Asp237, and Asp285.

The protein belongs to the PP2C family. Mg(2+) serves as cofactor. It depends on Mn(2+) as a cofactor.

It is found in the membrane. The enzyme catalyses O-phospho-L-seryl-[protein] + H2O = L-seryl-[protein] + phosphate. The catalysed reaction is O-phospho-L-threonyl-[protein] + H2O = L-threonyl-[protein] + phosphate. In terms of biological role, enzyme with a broad specificity. In Paramecium tetraurelia, this protein is Probable protein phosphatase 2C 6.